Reading from the N-terminus, the 493-residue chain is Glutamyl-tRNA(Gln) amidotransferase subunit A (493 aa).

Active-site charge relay system residues include lysine 79 and serine 159. The active-site Acyl-ester intermediate is the serine 183.

Belongs to the amidase family. GatA subfamily. Heterotrimer of A, B and C subunits.

The enzyme catalyses L-glutamyl-tRNA(Gln) + L-glutamine + ATP + H2O = L-glutaminyl-tRNA(Gln) + L-glutamate + ADP + phosphate + H(+). Functionally, allows the formation of correctly charged Gln-tRNA(Gln) through the transamidation of misacylated Glu-tRNA(Gln) in organisms which lack glutaminyl-tRNA synthetase. The reaction takes place in the presence of glutamine and ATP through an activated gamma-phospho-Glu-tRNA(Gln). The sequence is that of Glutamyl-tRNA(Gln) amidotransferase subunit A from Brucella suis (strain ATCC 23445 / NCTC 10510).